The primary structure comprises 403 residues: MSSTKKDIKVYVNYRDEYAEPKIISALKNSGKELTFTNSAKEANFQWAQYEDIDFDEVYKNPKTKLCCSYVIRKALIRKEYLWRTVITYLAKHPDSILSKSVPEAYSLELDYAEFLDDSLMEAYELRQELEENATKNISEKQWYILKPSMCDRAQGIRLFSTIEELQAIFDSFDDEESESEEAGLEEKGDITVAFNNKIVISQIRNFLVQKYISKPLLLDHRKFHIRAYVLATGALSVYLFNEMLCLLARDKYKKPTPDPDLLFSHLSNTCLQGDNVEQSSIRDFWNTSIENKDDIFKSILNIIGDVFEAAATTQGIHFQPLENCFEIFGVDFLVDCESQVYLLEVNSYPDFKQTGKNLSNIIENLFSAVVETAIIPFFESSTKRNVDSKLTLAKKLQLFGFR.

The TTL domain maps to K9–N386.

This sequence belongs to the tubulin--tyrosine ligase family. Mg(2+) is required as a cofactor. Requires K(+) as cofactor.

It is found in the cytoplasm. It localises to the nucleus. The catalysed reaction is C-terminal L-alpha-aminoacyl-L-glutamyl-L-glutamyl-[tubulin] + L-tyrosine + ATP = C-terminal L-alpha-aminoacyl-L-glutamyl-L-glutamyl-L-tyrosyl-[tubulin] + ADP + phosphate + H(+). In terms of biological role, probable tubulin--tyrosine ligase. The sequence is that of Probable tubulin--tyrosine ligase C12B10.04 from Schizosaccharomyces pombe (strain 972 / ATCC 24843) (Fission yeast).